The chain runs to 299 residues: ATP phosphoribosyltransferase (299 aa).

Belongs to the ATP phosphoribosyltransferase family. Long subfamily. It depends on Mg(2+) as a cofactor.

Its subcellular location is the cytoplasm. It carries out the reaction 1-(5-phospho-beta-D-ribosyl)-ATP + diphosphate = 5-phospho-alpha-D-ribose 1-diphosphate + ATP. It participates in amino-acid biosynthesis; L-histidine biosynthesis; L-histidine from 5-phospho-alpha-D-ribose 1-diphosphate: step 1/9. With respect to regulation, feedback inhibited by histidine. Catalyzes the condensation of ATP and 5-phosphoribose 1-diphosphate to form N'-(5'-phosphoribosyl)-ATP (PR-ATP). Has a crucial role in the pathway because the rate of histidine biosynthesis seems to be controlled primarily by regulation of HisG enzymatic activity. This Actinobacillus pleuropneumoniae serotype 7 (strain AP76) protein is ATP phosphoribosyltransferase.